The chain runs to 409 residues: MGEKPGTRVFKKSSPNCKLTVYLGKRDFVDHLDKVDPVDGVVLVDPDYLKDRKVFVTLTCAFRYGREDLDVLGLSFRKDLFIATYQAFPPVPNPPRPPTRLQDRLLRKLGQHAHPFFFTIPQNLPCSVTLQPGPEDTGKACGVDFEIRAFCAKSLEEKSHKRNSVRLVIRKVQFAPEKPGPQPSAETTRHFLMSDRSLHLEASLDKELYYHGEPLNVNVHVTNNSTKTVKKIKVSVRQYADICLFSTAQYKCPVAQLEQDDQVSPSSTFCKVYTITPLLSDNREKRGLALDGKLKHEDTNLASSTIVKEGANKEVLGILVSYRVKVKLVVSRGGDVSVELPFVLMHPKPHDHIPLPRPQSAAPETDVPVDTNLIEFDTNYATDDDIVFEDFARLRLKGMKDDDYDDQLC.

Residue Y48 is modified to Phosphotyrosine. 2 positions are modified to hydroxyproline; by PHD2: P176 and P181. An interaction with TRAF6 region spans residues 240-409 (ADICLFSTAQ…KDDDYDDQLC (170 aa)). Residue S360 is modified to Phosphoserine. The tract at residues 363 to 409 (PETDVPVDTNLIEFDTNYATDDDIVFEDFARLRLKGMKDDDYDDQLC) is interaction with AP2B1. A Phosphothreonine modification is found at T382. The [DE]-X(1,2)-F-X-X-[FL]-X-X-X-R motif motif lies at 385–395 (DIVFEDFARLR).

This sequence belongs to the arrestin family. As to quaternary structure, homooligomer; the self-association is mediated by InsP6-binding. Heterooligomer with ARRB1; the association is mediated by InsP6-binding. Interacts with ADRB2 and CHRM2. Interacts with PDE4A. Interacts with PDE4D. Interacts with MAPK10, MAPK1 and MAPK3. Interacts with DRD2. Interacts with FSHR. Interacts with CLTC. Interacts with HTR2C. Interacts with CCR5. Interacts with CXCR4. Interacts with SRC. Interacts with DUSP16; the interaction is interrupted by stimulation of AGTR1 and activation of MAPK10. Interacts with CHUK; the interaction is enhanced stimulation of ADRB2. Interacts with RELA. Interacts with MDM2; the interaction is enhanced by activation of GPCRs. Interacts with SLC9A5. Interacts with TRAF6. Interacts with IGF1R. Interacts with ENG. Interacts with KIR2DL1, KIR2DL3 and KIR2DL4. Interacts with LDLR. Interacts with AP2B1. Interacts with C5AR1. Interacts with RAF1. Interacts with MAP2K1. Interacts with MAPK1. Interacts with MAPK10; the interaction enhances MAPK10 activation by MAP3K5. Interacts with MAP2K4; the interaction is enhanced by presence of MAP3K5 and MAPK10. Interacts with MAP3K5. Interacts with AKT1. Interacts with IKBKB and MAP3K14. Interacts with SMO (activated). Interacts with GSK3A and GSK3B. Associates with protein phosphatase 2A (PP2A). Interacts with DHX8; the interaction is detected in the nucleus upon OR1D2 stimulation. Interacts with GAPDHS; the interaction is detected in the nucleus upon OR1D2 stimulation. Interacts with H2AFX; the interaction is detected in the nucleus upon OR1D2 stimulation. Interacts with KIF14; the interaction is detected in the nucleus upon OR1D2 stimulation. Interacts with RCC1; the interaction is detected in the nucleus upon OR1D2 stimulation. Interacts with CXCR4; the interaction is dependent on C-terminal phosphorylation of CXCR4 and allows activation of MAPK1 and MAPK3. Interacts with GPR143. Interacts with HCK and CXCR1 (phosphorylated). Interacts with ACKR3 and ACKR4. Interacts with ARRDC1; the interaction is direct. Interacts with GPR61, GPR62 and GPR135. Interacts (via NACHT and LRR domains) with NLRP3; this interaction is direct and inducible by omega-3 polyunsaturated fatty acids (PUFAs). Interacts with FFAR4 (via C-terminus); this interaction is stimulated by long-chain fatty acids (LCFAs). Interacts with GPR35. Interacts with GPR84. Interacts with TIGIT; this interaction inhibits the NF-kappa-B pathway. Interacts with TGFBR3. In terms of processing, phosphorylated at Thr-382 in the cytoplasm; probably dephosphorylated at the plasma membrane. The phosphorylation does not regulate internalization and recycling of ADRB2, interaction with clathrin or AP2B1. Post-translationally, the ubiquitination status appears to regulate the formation and trafficking of beta-arrestin-GPCR complexes and signaling. Ubiquitination appears to occur GPCR-specific. Ubiquitinated by MDM2; the ubiquitination is required for rapid internalization of ADRB2. Deubiquitinated by USP33; the deubiquitination leads to a dissociation of the beta-arrestin-GPCR complex. Stimulation of a class A GPCR, such as ADRB2, induces transient ubiquitination and subsequently promotes association with USP33. Stimulation of a class B GPCR promotes a sustained ubiquitination. Deubiquitinated by USP20; allowing USP20 to deubiquitinate TRAF6 leading to inhibition of NF-kappa-B signaling. Hydroxylation by PHD2 modulates the rate of internalization by slowing down recruitment to the plasma membrane and inhibiting subsequent co-internalization with class A receptors.

Its subcellular location is the cytoplasm. The protein localises to the nucleus. It is found in the cell membrane. The protein resides in the membrane. It localises to the clathrin-coated pit. Its subcellular location is the cytoplasmic vesicle. In terms of biological role, functions in regulating agonist-mediated G-protein coupled receptor (GPCR) signaling by mediating both receptor desensitization and resensitization processes. During homologous desensitization, beta-arrestins bind to the GPRK-phosphorylated receptor and sterically preclude its coupling to the cognate G-protein; the binding appears to require additional receptor determinants exposed only in the active receptor conformation. The beta-arrestins target many receptors for internalization by acting as endocytic adapters (CLASPs, clathrin-associated sorting proteins) and recruiting the GPRCs to the adapter protein 2 complex 2 (AP-2) in clathrin-coated pits (CCPs). However, the extent of beta-arrestin involvement appears to vary significantly depending on the receptor, agonist and cell type. Internalized arrestin-receptor complexes traffic to intracellular endosomes, where they remain uncoupled from G-proteins. Two different modes of arrestin-mediated internalization occur. Class A receptors, like ADRB2, OPRM1, ENDRA, D1AR and ADRA1B dissociate from beta-arrestin at or near the plasma membrane and undergo rapid recycling. Class B receptors, like AVPR2, AGTR1, NTSR1, TRHR and TACR1 internalize as a complex with arrestin and traffic with it to endosomal vesicles, presumably as desensitized receptors, for extended periods of time. Receptor resensitization then requires that receptor-bound arrestin is removed so that the receptor can be dephosphorylated and returned to the plasma membrane. Mediates endocytosis of CCR7 following ligation of CCL19 but not CCL21. Involved in internalization of P2RY1, P2RY4, P2RY6 and P2RY11 and ATP-stimulated internalization of P2RY2. Involved in phosphorylation-dependent internalization of OPRD1 and subsequent recycling or degradation. Involved in ubiquitination of IGF1R. Beta-arrestins function as multivalent adapter proteins that can switch the GPCR from a G-protein signaling mode that transmits short-lived signals from the plasma membrane via small molecule second messengers and ion channels to a beta-arrestin signaling mode that transmits a distinct set of signals that are initiated as the receptor internalizes and transits the intracellular compartment. Acts as a signaling scaffold for MAPK pathways such as MAPK1/3 (ERK1/2) and MAPK10 (JNK3). ERK1/2 and JNK3 activated by the beta-arrestin scaffold are largely excluded from the nucleus and confined to cytoplasmic locations such as endocytic vesicles, also called beta-arrestin signalosomes. Acts as a signaling scaffold for the AKT1 pathway. GPCRs for which the beta-arrestin-mediated signaling relies on both ARRB1 and ARRB2 (codependent regulation) include ADRB2, F2RL1 and PTH1R. For some GPCRs the beta-arrestin-mediated signaling relies on either ARRB1 or ARRB2 and is inhibited by the other respective beta-arrestin form (reciprocal regulation). Increases ERK1/2 signaling in AGTR1- and AVPR2-mediated activation (reciprocal regulation). Involved in CCR7-mediated ERK1/2 signaling involving ligand CCL19. Is involved in type-1A angiotensin II receptor/AGTR1-mediated ERK activity. Is involved in type-1A angiotensin II receptor/AGTR1-mediated MAPK10 activity. Is involved in dopamine-stimulated AKT1 activity in the striatum by disrupting the association of AKT1 with its negative regulator PP2A. Involved in AGTR1-mediated chemotaxis. Appears to function as signaling scaffold involved in regulation of MIP-1-beta-stimulated CCR5-dependent chemotaxis. Involved in attenuation of NF-kappa-B-dependent transcription in response to GPCR or cytokine stimulation by interacting with and stabilizing CHUK. Suppresses UV-induced NF-kappa-B-dependent activation by interacting with CHUK. The function is promoted by stimulation of ADRB2 and dephosphorylation of ARRB2. Involved in p53/TP53-mediated apoptosis by regulating MDM2 and reducing the MDM2-mediated degradation of p53/TP53. May serve as nuclear messenger for GPCRs. Upon stimulation of OR1D2, may be involved in regulation of gene expression during the early processes of fertilization. Also involved in regulation of receptors other than GPCRs. Involved in endocytosis of TGFBR2 and TGFBR3 and down-regulates TGF-beta signaling such as NF-kappa-B activation. Involved in endocytosis of low-density lipoprotein receptor/LDLR. Involved in endocytosis of smoothened homolog/Smo, which also requires GRK2. Involved in endocytosis of SLC9A5. Involved in endocytosis of ENG and subsequent TGF-beta-mediated ERK activation and migration of epithelial cells. Involved in Toll-like receptor and IL-1 receptor signaling through the interaction with TRAF6 which prevents TRAF6 autoubiquitination and oligomerization required for activation of NF-kappa-B and JUN. Involved in insulin resistance by acting as insulin-induced signaling scaffold for SRC, AKT1 and INSR. Involved in regulation of inhibitory signaling of natural killer cells by recruiting PTPN6 and PTPN11 to KIR2DL1. Involved in IL8-mediated granule release in neutrophils. Involved in the internalization of the atypical chemokine receptor ACKR3. Acts as an adapter protein coupling FFAR4 receptor to specific downstream signaling pathways, as well as mediating receptor endocytosis. During the activation step of NLRP3 inflammasome, directly associates with NLRP3 leading to inhibition of pro-inflammatory cytokine release and inhibition of inflammation. The protein is Beta-arrestin-2 (ARRB2) of Homo sapiens (Human).